The sequence spans 263 residues: Glutamate 5-kinase (263 aa).

Position 14 (Lys-14) interacts with ATP. Positions 52, 137, and 149 each coordinate substrate. ATP contacts are provided by residues 169-170 (SD) and 211-217 (TGGIVTK).

The protein belongs to the glutamate 5-kinase family. Homotetramer; oligomerization is not affected by L-proline feedback inhibition. Requires Mg(2+) as cofactor.

The enzyme catalyses L-glutamate + ATP = L-glutamyl 5-phosphate + ADP. It functions in the pathway amino-acid biosynthesis; L-proline biosynthesis; L-glutamate 5-semialdehyde from L-glutamate: step 1/2. With respect to regulation, inhibited by L-proline as part of a negative feedback loop. Also inhibited by L-proline analogs 3,4-dehydro-L-proline, L-azetidine-2-carboxylic acid and L-4-thiazolidine carboxylic acid. Catalyzes the transfer of a phosphate group to glutamate to form L-glutamate 5-phosphate. May be important for growth and survival. The chain is Glutamate 5-kinase from Leishmania donovani.